Here is an 820-residue protein sequence, read N- to C-terminus: Leucine--tRNA ligase (820 aa).

The 'HIGH' region signature appears at 40–51; that stretch reads PYPSGAGLHVGH. Positions 601-605 match the 'KMSKS' region motif; the sequence is KMSKS. Lys604 lines the ATP pocket.

It belongs to the class-I aminoacyl-tRNA synthetase family.

It localises to the cytoplasm. It catalyses the reaction tRNA(Leu) + L-leucine + ATP = L-leucyl-tRNA(Leu) + AMP + diphosphate. The protein is Leucine--tRNA ligase of Chlamydia felis (strain Fe/C-56) (Chlamydophila felis).